The following is a 364-amino-acid chain: Serpentine receptor class epsilon-27 (364 aa).

A run of 7 helical transmembrane segments spans residues 31-51 (VIASIELILYSICLYIVVVSL), 64-84 (FIILVAPFFGIWFELIIGKLI), 125-145 (LLIIAGFMEYHYMFSVVFGAV), 167-187 (IFIPIALTVFFQIIAITCSCL), 195-215 (IITINGTWIVSCACSSIVFFL), 257-277 (LIFSELGTISIIGLIIATLLL), and 290-310 (NALFLNPFGICTVAMYSIPAW).

This sequence belongs to the nematode receptor-like protein sre family.

The protein localises to the membrane. The chain is Serpentine receptor class epsilon-27 (sre-27) from Caenorhabditis elegans.